The following is a 360-amino-acid chain: tRNA pseudouridine synthase D (360 aa).

The active-site Nucleophile is the aspartate 76. The TRUD domain occupies 151-332; it reads GMPNFFGYQR…HGIYKEKNAW (182 aa).

This sequence belongs to the pseudouridine synthase TruD family.

It catalyses the reaction uridine(13) in tRNA = pseudouridine(13) in tRNA. Responsible for synthesis of pseudouridine from uracil-13 in transfer RNAs. This chain is tRNA pseudouridine synthase D, found in Nitratiruptor sp. (strain SB155-2).